Consider the following 258-residue polypeptide: Snake venom serine protease BPA (258 aa).

The N-terminal stretch at 1–18 (MVLIRVIANLLILQLSNA) is a signal peptide. Positions 19–24 (QKSSEL) are excised as a propeptide. Positions 25-249 (VIGGDECNIT…YLPWIQSIIA (225 aa)) constitute a Peptidase S1 domain. 6 disulfide bridges follow: C31/C163, C50/C66, C98/C256, C142/C210, C174/C189, and C200/C225. N-linked (GlcNAc...) asparagine glycans are attached at residues N32 and N44. H65 serves as the catalytic Charge relay system. Residue N103 is glycosylated (N-linked (GlcNAc...) asparagine). D110 serves as the catalytic Charge relay system. The N-linked (GlcNAc...) asparagine glycan is linked to N121. S133 carries O-linked (GalNAc...) serine glycosylation. 2 N-linked (GlcNAc...) asparagine glycosylation sites follow: N154 and N170. The active-site Charge relay system is S204. N211 and N251 each carry an N-linked (GlcNAc...) asparagine glycan. T255 is a glycosylation site (O-linked (GalNAc...) threonine).

Belongs to the peptidase S1 family. Snake venom subfamily. As to quaternary structure, monomer. Post-translationally, N- and O-glycosylated. The glycosylation has a stabilizing effect on the protein. However, the removal of part of the carbohydrates enhances the proteolytic activity of the SVSP towards human and rat fibrinogen. Expressed by the venom gland.

The protein resides in the secreted. Its activity is regulated as follows. Inhibited by diisopropylfluorophosphate (DFP), but not by SBTI, Antithrombin III/heparin and BPTI, probably due to steric hindrance caused by its huge carbohydrate moietie. Its function is as follows. Snake venom serine protease that has a potent and selective fibrinogenolytic activity. Preferentially cleaves the alpha-chain (FGA) of human and rat fibrinogen at Arg-|-Gly bonds, and slowly digests the beta-chain (FGB). In vivo, completely avoids thrombus formation induced in rat, decreases the fibrinogen plasma level and prolonges the recalcification time. Possesses esterolytic and amidolytic activities. This is Snake venom serine protease BPA from Bothrops jararaca (Jararaca).